The primary structure comprises 497 residues: Glycogen synthase (497 aa).

An ADP-alpha-D-glucose-binding site is contributed by Lys15.

The protein belongs to the glycosyltransferase 1 family. Bacterial/plant glycogen synthase subfamily.

The catalysed reaction is [(1-&gt;4)-alpha-D-glucosyl](n) + ADP-alpha-D-glucose = [(1-&gt;4)-alpha-D-glucosyl](n+1) + ADP + H(+). It functions in the pathway glycan biosynthesis; glycogen biosynthesis. In terms of biological role, synthesizes alpha-1,4-glucan chains using ADP-glucose. The polypeptide is Glycogen synthase (Thermodesulfovibrio yellowstonii (strain ATCC 51303 / DSM 11347 / YP87)).